The sequence spans 288 residues: Small ribosomal subunit protein uS2 (288 aa).

Residues 228–288 (RAGLSSDKDA…PAAEAPSTEA (61 aa)) form a disordered region. The span at 257–288 (QAAPAAEAAPAAEAQAAPAAEAPAAEAPSTEA) shows a compositional bias: low complexity.

Belongs to the universal ribosomal protein uS2 family.

In Rhodococcus opacus (strain B4), this protein is Small ribosomal subunit protein uS2.